A 459-amino-acid chain; its full sequence is XK-related protein 3 (459 aa).

10 helical membrane-spanning segments follow: residues F35 to F55, S68 to F88, A97 to I117, I169 to I189, L199 to I219, V238 to A258, S264 to W284, M300 to S320, I345 to F365, and L377 to Y397.

The protein belongs to the XK family. Expressed predominantly, if not exclusively, in testis.

The protein resides in the cell membrane. The sequence is that of XK-related protein 3 (XKR3) from Homo sapiens (Human).